Reading from the N-terminus, the 230-residue chain is Ribose-5-phosphate isomerase A (230 aa).

Substrate contacts are provided by residues 29 to 32, 85 to 88, and 98 to 101; these read TGST, DGAD, and KGGG. The active-site Proton acceptor is glutamate 107. Lysine 125 lines the substrate pocket.

The protein belongs to the ribose 5-phosphate isomerase family. As to quaternary structure, homodimer.

It catalyses the reaction aldehydo-D-ribose 5-phosphate = D-ribulose 5-phosphate. It functions in the pathway carbohydrate degradation; pentose phosphate pathway; D-ribose 5-phosphate from D-ribulose 5-phosphate (non-oxidative stage): step 1/1. In terms of biological role, catalyzes the reversible conversion of ribose-5-phosphate to ribulose 5-phosphate. The protein is Ribose-5-phosphate isomerase A of Staphylococcus haemolyticus (strain JCSC1435).